Here is a 40-residue protein sequence, read N- to C-terminus: VIIYELNLQGTTKAQYSTILKQLRDDIKDPNLXYGXXDYS.

This sequence belongs to the ribosome-inactivating protein family. Type 1 RIP subfamily.

The catalysed reaction is Endohydrolysis of the N-glycosidic bond at one specific adenosine on the 28S rRNA.. In terms of biological role, ribosome-inactivating protein of type 1, inhibits protein synthesis in animal cells. This Saponaria officinalis (Common soapwort) protein is Ribosome-inactivating protein saporin-1 (SAP1).